We begin with the raw amino-acid sequence, 82 residues long: ATP synthase subunit c (82 aa).

Helical transmembrane passes span 3–23 (PLIASASVLAAALAIGLASLG) and 57–77 (LAFMESLTIYGLVIALVLLFA).

F-type ATPases have 2 components, F(1) - the catalytic core - and F(0) - the membrane proton channel. F(1) has five subunits: alpha(3), beta(3), gamma(1), delta(1), epsilon(1). F(0) has four main subunits: a(1), b(1), b'(1) and c(10-14). The alpha and beta chains form an alternating ring which encloses part of the gamma chain. F(1) is attached to F(0) by a central stalk formed by the gamma and epsilon chains, while a peripheral stalk is formed by the delta, b and b' chains.

The protein resides in the cellular thylakoid membrane. With respect to regulation, inhibited by dicyclohexylcarbodiimide. Functionally, f(1)F(0) ATP synthase produces ATP from ADP in the presence of a proton or sodium gradient. F-type ATPases consist of two structural domains, F(1) containing the extramembraneous catalytic core and F(0) containing the membrane proton channel, linked together by a central stalk and a peripheral stalk. During catalysis, ATP synthesis in the catalytic domain of F(1) is coupled via a rotary mechanism of the central stalk subunits to proton translocation. In terms of biological role, key component of the F(0) channel; it plays a direct role in translocation across the membrane. A homomeric c-ring of between 10-14 subunits forms the central stalk rotor element with the F(1) delta and epsilon subunits. Its function is as follows. The complex from the organism is particularly stable to disruption and remains functional after 6 hrs at 55 degrees Celsius. This chain is ATP synthase subunit c (atpE), found in Thermosynechococcus vestitus (strain NIES-2133 / IAM M-273 / BP-1).